The chain runs to 219 residues: Resolvase (219 aa).

The region spanning 15–159 (VARIYLRAST…EDRRERQRQG (145 aa)) is the Resolvase/invertase-type recombinase catalytic domain. The active-site O-(5'-phospho-DNA)-serine intermediate is Ser23.

The protein belongs to the site-specific recombinase resolvase family.

Its function is as follows. Involved in plasmid partition. In Escherichia coli, this protein is Resolvase (parA).